We begin with the raw amino-acid sequence, 346 residues long: DnaJ protein ERDJ3B (346 aa).

Residues 1-23 (MAIRWSELCIVLFALSYAICVLA) form the signal peptide. Residues 26–91 (SYYDVLQVPK…EKREIYNKYG (66 aa)) enclose the J domain. Asparagine 267 carries N-linked (GlcNAc...) asparagine glycosylation.

In terms of assembly, interacts with SDF2 and MED37A/BIP1. N-glycosylated. In terms of tissue distribution, expressed in leaves, flower buds and flowers.

The protein localises to the endoplasmic reticulum lumen. In terms of biological role, regulates protein folding in the endoplasmic reticulum (ER) lumen. Forms a complex in the ER with SDF2 and MED37A/BIP1 which is required for the proper accumulation and function of the surface-exposed leucine-rich repeat receptor kinases EFR involved in pathogen-associated molecular pattern (PAMP) triggered immunity. In Arabidopsis thaliana (Mouse-ear cress), this protein is DnaJ protein ERDJ3B (ERDJ3B).